A 393-amino-acid chain; its full sequence is Probable WRKY transcription factor 25 (393 aa).

The segment at residues 160-224 (MVSRNSNDGY…YKGGHNHPKP (65 aa)) is a DNA-binding region (WRKY 1). Zn(2+) contacts are provided by C191, C196, H219, and H221. Disordered stretches follow at residues 217-242 (GGHN…VNGR) and 277-303 (SEYG…DEGM). A compositionally biased stretch (polar residues) spans 229–240 (RPSQSSLPSSVN). Residues 289 to 298 (PEMKRMKREG) are compositionally biased toward basic and acidic residues. The WRKY 2 DNA-binding region spans 322–387 (SDIDVLIDGF…YEGRHNHDIP (66 aa)). Zn(2+) is bound by residues C353, C358, H382, and H384.

This sequence belongs to the WRKY group I family. In terms of assembly, interacts with MKS1. Interacts with SIB1. Interacts with VQ10 and CAMBP25/VQ15. Post-translationally, phosphorylated by MPK4. As to expression, highly expressed in roots and at lower levels in leaves, stems and seeds.

It localises to the nucleus. Transcription factor. Interacts specifically with the W box (5'-(T)TGAC[CT]-3'), a frequently occurring elicitor-responsive cis-acting element. Functions with WRKY33 as positive regulator of salt stress response and abscisic acid (ABA) signaling. Plays a partial role in heat stress tolerance. Functions with WRKY26 and WRKY33 as positive regulator of plant thermotolerance by partially participating in ethylene-response signal transduction pathway. The chain is Probable WRKY transcription factor 25 (WRKY25) from Arabidopsis thaliana (Mouse-ear cress).